The following is a 453-amino-acid chain: DDB1- and CUL4-associated factor 12 (453 aa).

Residues 1-12 are compositionally biased toward basic residues; sequence MARKAVSRKRKA. A disordered region spans residues 1 to 26; that stretch reads MARKAVSRKRKAPASPGAGSDAQGQQ. The interval 1-38 is required for nuclear location and interaction with MOV10; the sequence is MARKAVSRKRKAPASPGAGSDAQGQQFGWDHTLHKRKR. Serine 15 bears the Phosphoserine mark. 4 WD repeats span residues 138–178, 182–220, 250–289, and 338–375; these read QQGC…PVCV, GHKD…LTKS, PDNC…SKLL, and ERGS…FLEE.

This sequence belongs to the WD repeat DCAF12 family. Component of the DCX(DCAF12) E3 ubiquitin ligase complex, at least composed of CUL4 (CUL4A or CUL4B), DDB1, DCAF12 and RBX1.

It localises to the cytoplasm. It is found in the cytoskeleton. The protein localises to the microtubule organizing center. Its subcellular location is the centrosome. The protein resides in the nucleus. The protein operates within protein modification; protein ubiquitination. Substrate-recognition component of a DCX (DDB1-CUL4-X-box) E3 ubiquitin-protein ligase complex of the DesCEND (destruction via C-end degrons) pathway, which recognizes a C-degron located at the extreme C terminus of target proteins, leading to their ubiquitination and degradation. The C-degron recognized by the DesCEND pathway is usually a motif of less than ten residues and can be present in full-length proteins, truncated proteins or proteolytically cleaved forms. The DCX(DCAF12) complex specifically recognizes proteins with a diglutamate (Glu-Glu) at the C-terminus, such as MAGEA3, MAGEA6 and CCT5, leading to their ubiquitination and degradation. Ubiquitination of MAGEA3, MAGEA6 by DCX(DCAF12) complex is required for starvation-induced autophagy. Also directly recognizes the C-terminal glutamate-leucine (Glu-Leu) degron as an alternative degron in proteins such as MOV10, leading to their ubiquitination and degradation. Controls the protein level of MOV10 during spermatogenesis and in T cells, especially after their activation. This chain is DDB1- and CUL4-associated factor 12 (DCAF12), found in Macaca fascicularis (Crab-eating macaque).